Consider the following 552-residue polypeptide: Acyl-CoA synthetase FUM10 (552 aa).

Residue 183-194 (ELFTSGTTGAPK) coordinates AMP. The segment at 463–536 (EIEHVARLHD…QEIPYNRTGK (74 aa)) is AMP-binding.

It belongs to the ATP-dependent AMP-binding enzyme family.

The protein operates within mycotoxin biosynthesis. Its function is as follows. Acyl-CoA synthetase; part of the gene cluster that mediates the biosynthesis of fumonisins B1 (FB1), B2 (FB2), B3 (FB3), and B4 (FB4), which are carcinogenic mycotoxins. Within the pathway, FUM10 is involved the addition of the tricarballylic moieties to the carbon backbone. FUM10 catalyzes the CoA activation of citrate to form tricarballylic acid. The biosynthesis starts with the FUM1-catalyzed carbon chain assembly from one molecule of acetyl-CoA, eight molecules of malonyl-CoA, and two molecules of methionine (in S-adenosyl form). The C18 polyketide chain is released from the enzyme by a nucleophilic attack of a carbanion, which is derived from R-carbon of alanine by decarboxylation, on the carbonyl carbon of polyketide acyl chain. This step is catalyzed by the pyridoxal 5'-phosphate-dependent aminoacyl transferase FUM8. The resultant 3-keto intermediate is then stereospecifically reduced to a 3-hydroxyl product by reductase FUM13. Subsequent oxidations at C-10 by the cytochrome P450 monooxygenase FUM2, C-14 and C-15 by FUM6, FUM12 or FUM15, tricarballylic esterification of the hydroxyl groups on C-14 and C-15 by acyltransferase FUM14, and C-5 hydroxylation by 2-keto-glutarate-dependent dioxygenase FUM3 furnish the biosynthesis of fumonisins. The tricarballylic moieties are most likely derived from the citric acid cycle, and their addition to the carbon backbone may involve FUM7, FUM10, FUM11 and FUM14. The chain is Acyl-CoA synthetase FUM10 from Gibberella moniliformis (strain M3125 / FGSC 7600) (Maize ear and stalk rot fungus).